Reading from the N-terminus, the 400-residue chain is MAGCVPLLQGLVLVLALHRVEPSVFLPASKANDVLVRWKRAGSYLLEELFEGNLEKECYEEICVYEEAREVFENEVVTDEFWRRYKGGSPCISQPCLHNGSCQDSIWGYTCTCSPGYEGSNCELAKNECHPERTDGCQHFCLPGQESYTCSCAQGYRLGEDHKQCVPHDQCACGVLTSEKRAPDLQDLPWQVKLTNSEGKDFCGGVIIRENFVLTTAKCSLLHRNITVKTYFNRTSQDPLMIKITHVHVHMRYDADAGENDLSLLELEWPIQCPGAGLPVCTPEKDFAEHLLIPRTRGLLSGWARNGTDLGNSLTTRPVTLVEGEECGQVLNVTVTTRTYCERSSVAAMHWMDGSVVTREHRGSWFLTGVLGSQPVGGQAHMVLVTKVSRYSLWFKQIMN.

An N-terminal signal peptide occupies residues 1–23 (MAGCVPLLQGLVLVLALHRVEPS). The propeptide occupies 24-40 (VFLPASKANDVLVRWKR). One can recognise a Gla domain in the interval 41–86 (AGSYLLEELFEGNLEKECYEEICVYEEAREVFENEVVTDEFWRRYK). A 4-carboxyglutamate mark is found at Glu47, Glu48, Glu51, Glu55, Glu57, Glu60, Glu61, Glu66, Glu67, Glu70, Glu73, Glu75, and Glu80. The cysteines at positions 58 and 63 are disulfide-linked. EGF-like domains are found at residues 87–123 (GGSPCISQPCLHNGSCQDSIWGYTCTCSPGYEGSNCE) and 125–166 (AKNE…KQCV). 7 cysteine pairs are disulfide-bonded: Cys91/Cys102, Cys96/Cys111, Cys113/Cys122, Cys129/Cys141, Cys137/Cys150, Cys152/Cys165, and Cys203/Cys219. Ser93 carries O-linked (Glc...) serine glycosylation. Asn99 is a glycosylation site (N-linked (GlcNAc...) asparagine). At Asp104 the chain carries (3R)-3-hydroxyaspartate. The region spanning 175-400 (VLTSEKRAPD…YSLWFKQIMN (226 aa)) is the Peptidase S1 domain. N-linked (GlcNAc...) asparagine glycosylation is found at Asn225, Asn233, Asn306, and Asn332. Cysteines 327 and 341 form a disulfide.

This sequence belongs to the peptidase S1 family. Interacts with SERPINA10. The iron and 2-oxoglutarate dependent 3-hydroxylation of aspartate and asparagine is (R) stereospecific within EGF domains. As to expression, plasma.

Its subcellular location is the secreted. In terms of biological role, appears to assist hemostasis by binding thrombin and promoting its association with phospholipid vesicles. Inhibits activity of the coagulation protease factor Xa in the presence of SERPINA10, calcium and phospholipids. This Homo sapiens (Human) protein is Vitamin K-dependent protein Z (PROZ).